Consider the following 215-residue polypeptide: Cytochrome b6 (215 aa).

A helical membrane pass occupies residues I32–F52. C35 is a heme c binding site. The heme b site is built by H86 and H100. 3 consecutive transmembrane segments (helical) span residues A90–F110, L116–Y136, and L186–I206. Residues H187 and H202 each coordinate heme b.

It belongs to the cytochrome b family. PetB subfamily. In terms of assembly, the 4 large subunits of the cytochrome b6-f complex are cytochrome b6, subunit IV (17 kDa polypeptide, PetD), cytochrome f and the Rieske protein, while the 4 small subunits are PetG, PetL, PetM and PetN. The complex functions as a dimer. The cofactor is heme b. It depends on heme c as a cofactor.

It is found in the plastid. It localises to the chloroplast thylakoid membrane. Functionally, component of the cytochrome b6-f complex, which mediates electron transfer between photosystem II (PSII) and photosystem I (PSI), cyclic electron flow around PSI, and state transitions. The polypeptide is Cytochrome b6 (Morus indica (Mulberry)).